The sequence spans 82 residues: MEKLIINSMKKVFLEELKDLENELNQIFKKYNVKSKDELKKKIANGEIKEEQIKDDLERIEFLEENIERVMKCLREINVKSL.

This is an uncharacterized protein from Methanocaldococcus jannaschii (strain ATCC 43067 / DSM 2661 / JAL-1 / JCM 10045 / NBRC 100440) (Methanococcus jannaschii).